The following is a 449-amino-acid chain: Glucose-6-phosphate isomerase (449 aa).

The Proton donor role is filled by Glu291. Residues His312 and Lys426 contribute to the active site.

The protein belongs to the GPI family.

The protein localises to the cytoplasm. The enzyme catalyses alpha-D-glucose 6-phosphate = beta-D-fructose 6-phosphate. The protein operates within carbohydrate biosynthesis; gluconeogenesis. It functions in the pathway carbohydrate degradation; glycolysis; D-glyceraldehyde 3-phosphate and glycerone phosphate from D-glucose: step 2/4. Catalyzes the reversible isomerization of glucose-6-phosphate to fructose-6-phosphate. The polypeptide is Glucose-6-phosphate isomerase (Streptococcus pneumoniae (strain ATCC BAA-255 / R6)).